The primary structure comprises 97 residues: Integration host factor subunit alpha (97 aa).

Belongs to the bacterial histone-like protein family. As to quaternary structure, heterodimer of an alpha and a beta chain.

In terms of biological role, this protein is one of the two subunits of integration host factor, a specific DNA-binding protein that functions in genetic recombination as well as in transcriptional and translational control. In Histophilus somni (strain 2336) (Haemophilus somnus), this protein is Integration host factor subunit alpha.